The following is a 476-amino-acid chain: Probable flippase AglR (476 aa).

The next 14 helical transmembrane spans lie at 7–29, 34–56, 83–103, 112–132, 146–166, 168–188, 222–242, 246–266, 287–307, 310–330, 354–373, 377–396, 409–429, and 439–459; these read ASAL…TIYV, GVGA…IPAV, VLTG…SPFV, TQLV…LGGL, ALWG…GVGV, ALFY…VYSL, WLDT…IYEV, ISAL…PTIS, VAGV…GDIL, YGPS…LSVV, FRIG…SLIP, VIGA…ILAV, VSAI…LFTI, and IEVV…LLSL.

This sequence belongs to the AglR/Agl15 family.

It localises to the cell membrane. Its pathway is cell surface structure biogenesis; S-layer biogenesis. Involved in the assembly of a N-linked pentasaccharide that decorates the S-layer glycoprotein and flagellins. Probably mediates or contributes to the translocation of the dolichol-phosphate-mannose across the membrane. The chain is Probable flippase AglR (aglR) from Haloferax volcanii (strain ATCC 29605 / DSM 3757 / JCM 8879 / NBRC 14742 / NCIMB 2012 / VKM B-1768 / DS2) (Halobacterium volcanii).